Here is a 155-residue protein sequence, read N- to C-terminus: Endoribonuclease YbeY (155 aa).

The Zn(2+) site is built by histidine 120, histidine 124, and histidine 130.

Belongs to the endoribonuclease YbeY family. It depends on Zn(2+) as a cofactor.

It localises to the cytoplasm. Functionally, single strand-specific metallo-endoribonuclease involved in late-stage 70S ribosome quality control and in maturation of the 3' terminus of the 16S rRNA. The chain is Endoribonuclease YbeY from Borreliella burgdorferi (strain ATCC 35210 / DSM 4680 / CIP 102532 / B31) (Borrelia burgdorferi).